The chain runs to 340 residues: UDP-3-O-acylglucosamine N-acyltransferase (340 aa).

Catalysis depends on His238, which acts as the Proton acceptor.

The protein belongs to the transferase hexapeptide repeat family. LpxD subfamily. In terms of assembly, homotrimer.

It catalyses the reaction a UDP-3-O-[(3R)-3-hydroxyacyl]-alpha-D-glucosamine + a (3R)-hydroxyacyl-[ACP] = a UDP-2-N,3-O-bis[(3R)-3-hydroxyacyl]-alpha-D-glucosamine + holo-[ACP] + H(+). It functions in the pathway bacterial outer membrane biogenesis; LPS lipid A biosynthesis. Its function is as follows. Catalyzes the N-acylation of UDP-3-O-acylglucosamine using 3-hydroxyacyl-ACP as the acyl donor. Is involved in the biosynthesis of lipid A, a phosphorylated glycolipid that anchors the lipopolysaccharide to the outer membrane of the cell. The chain is UDP-3-O-acylglucosamine N-acyltransferase from Shewanella denitrificans (strain OS217 / ATCC BAA-1090 / DSM 15013).